A 534-amino-acid chain; its full sequence is Calmodulin calcium-dependent NAD kinase (534 aa).

Residues 167 to 196 are calmodulin-binding; it reads QKVPKLKDFVMAATRKQRFERVTKDLKVKR. 238–245 lines the ATP pocket; the sequence is GGMGAGKS.

Interacts with calmodulin (CaM) in a calcium Ca(2+)-dependent manner in vitro. Ca(2+) serves as cofactor.

The protein localises to the mitochondrion outer membrane. The catalysed reaction is NAD(+) + ATP = ADP + NADP(+) + H(+). Its function is as follows. Phosphorylates NAD(+) to produce NADP(+) in a calmodulin calcium-dependent manner. Does not possess activity toward NADH. Has broad specificity for the phosphoryl donor, as ATP, CTP, GTP and UTP can be used interchangeably and produce similar efficiencies. May play a role in producing NADP(H) needed to regulate the elicitor-induced reactive oxygen species (ROS) burst by sustaining the activity of NADPH oxidases. Does not seem to play a role in photosynthesis-driven growth. In Arabidopsis thaliana (Mouse-ear cress), this protein is Calmodulin calcium-dependent NAD kinase.